The following is a 291-amino-acid chain: ATP synthase gamma chain (291 aa).

This sequence belongs to the ATPase gamma chain family. In terms of assembly, F-type ATPases have 2 components, CF(1) - the catalytic core - and CF(0) - the membrane proton channel. CF(1) has five subunits: alpha(3), beta(3), gamma(1), delta(1), epsilon(1). CF(0) has three main subunits: a, b and c.

It is found in the cell inner membrane. Its function is as follows. Produces ATP from ADP in the presence of a proton gradient across the membrane. The gamma chain is believed to be important in regulating ATPase activity and the flow of protons through the CF(0) complex. The protein is ATP synthase gamma chain of Neisseria meningitidis serogroup B (strain ATCC BAA-335 / MC58).